Here is a 369-residue protein sequence, read N- to C-terminus: Spore membrane assembly protein 2 (369 aa).

The Cytoplasmic segment spans residues 1-6; sequence MLFPKR. Residues 7–27 traverse the membrane as a helical segment; that stretch reads LIVWGVLLILSLSQFVLYLPA. Over 28–220 the chain is Lumenal; that stretch reads TTCTNSKGLR…NLAFILMMFN (193 aa). The helical transmembrane segment at 221–241 threads the bilayer; that stretch reads GMVFYFAVLEIIVGFLSICVV. Topologically, residues 242–265 are cytoplasmic; the sequence is SAFGGALSVGKRHRLFPILLKSSS. The helical transmembrane segment at 266–286 threads the bilayer; the sequence is SILVVIATLTILCNIVYLIAL. Residues 287–319 are Lumenal-facing; that stretch reads KTLEPEEVTDVGSDNAAVHTTGWELLKVNVGSG. A helical membrane pass occupies residues 320 to 340; sequence FIMGLARYAIQWVLLVLAFLA. At 341–369 the chain is on the cytoplasmic side; the sequence is ANHYKAKPKKSDKYTEDTSNSPSPDLMEK. The disordered stretch occupies residues 348-369; sequence PKKSDKYTEDTSNSPSPDLMEK.

It belongs to the SMA2 family.

It is found in the prospore membrane. Its subcellular location is the endoplasmic reticulum. Involved in spore and ascus formation. Required for the efficient assembly of the precursors of the prospore membrane to a continuous prospore membrane. The polypeptide is Spore membrane assembly protein 2 (SMA2) (Saccharomyces cerevisiae (strain YJM789) (Baker's yeast)).